The following is a 1411-amino-acid chain: DNA-directed RNA polymerase subunit beta' (1411 aa).

Zn(2+)-binding residues include C70, C72, C85, and C88. 3 residues coordinate Mg(2+): D458, D460, and D462. Residues C813, C887, C894, and C897 each contribute to the Zn(2+) site. The tract at residues 1391-1411 is disordered; the sequence is AQAEVPELDGSSVTASDAAAD.

It belongs to the RNA polymerase beta' chain family. As to quaternary structure, the RNAP catalytic core consists of 2 alpha, 1 beta, 1 beta' and 1 omega subunit. When a sigma factor is associated with the core the holoenzyme is formed, which can initiate transcription. Requires Mg(2+) as cofactor. Zn(2+) serves as cofactor.

The enzyme catalyses RNA(n) + a ribonucleoside 5'-triphosphate = RNA(n+1) + diphosphate. Its function is as follows. DNA-dependent RNA polymerase catalyzes the transcription of DNA into RNA using the four ribonucleoside triphosphates as substrates. This chain is DNA-directed RNA polymerase subunit beta', found in Verminephrobacter eiseniae (strain EF01-2).